Consider the following 394-residue polypeptide: 2-oxoglutarate and iron-dependent oxygenase domain-containing protein CP2 (394 aa).

Residues 1–35 (MSSEQREGSQETTTTTVEGNGTIAGQNSHSAAPTT) are disordered. Residues 17–35 (VEGNGTIAGQNSHSAAPTT) are compositionally biased toward polar residues. In terms of domain architecture, Fe2OG dioxygenase spans 248-347 (DSHHGFVVEY…RVNMLLWCRS (100 aa)). Fe cation is bound by residues His-268, Asp-270, and His-328. Arg-338 is a 2-oxoglutarate binding site.

The cofactor is Fe(2+). Requires L-ascorbate as cofactor. As to expression, expressed in roots, cotyledons, rosette leaves, cauline leaves, inflorescences and siliques.

The protein localises to the nucleus. It is found in the nucleoplasm. In terms of biological role, participates in the epigenetic repression of flowering genes in association with ICU11. Functions in the repression of several members of the MADS-box transcription factors family, including SEP3, during vegetative development via histone modification. The sequence is that of 2-oxoglutarate and iron-dependent oxygenase domain-containing protein CP2 from Arabidopsis thaliana (Mouse-ear cress).